Consider the following 459-residue polypeptide: Serine/threonine-protein kinase 12 (459 aa).

The interval 1 to 30 (MEEDYQQPRFTIGRQSSMAPEKIPEPSVHS) is disordered. ANK repeat units follow at residues 42 to 71 (DGGV…DANY), 75 to 104 (DDRT…EVDP), and 108 to 137 (WGST…KHPM). Residues 102 to 417 (VDPKDRWGST…EIIKRLESIL (316 aa)) form the Protein kinase domain. ATP is bound by residues 108 to 116 (WGSTPFADA) and K184. Residue D281 is the Proton acceptor of the active site.

This sequence belongs to the protein kinase superfamily. Ser/Thr protein kinase family. Interacts with BLUS1, PHOT1 and PHOT2. As to expression, accumulates in leaves, stems, petioles and roots, especially in guard cells.

It is found in the cytoplasm. The protein localises to the cytosol. The enzyme catalyses L-seryl-[protein] + ATP = O-phospho-L-seryl-[protein] + ADP + H(+). It catalyses the reaction L-threonyl-[protein] + ATP = O-phospho-L-threonyl-[protein] + ADP + H(+). Serine/threonine protein kinase that phosphorylates proteins on serine and threonine residues. Mediates blue light-dependent stomatal opening in guard cells by promoting plasma membrane-type ATPases (AHA1 and AHA2) phosphorylation. This Arabidopsis thaliana (Mouse-ear cress) protein is Serine/threonine-protein kinase 12.